The primary structure comprises 221 residues: DNA mismatch repair protein MutH (221 aa).

Belongs to the MutH family.

The protein resides in the cytoplasm. Sequence-specific endonuclease that cleaves unmethylated GATC sequences. It is involved in DNA mismatch repair. The chain is DNA mismatch repair protein MutH from Vibrio cholerae serotype O1 (strain ATCC 39315 / El Tor Inaba N16961).